We begin with the raw amino-acid sequence, 891 residues long: Putative alpha,alpha-trehalose-phosphate synthase [UDP-forming] 100 kDa subunit (891 aa).

A Phosphothreonine modification is found at T88. The segment at T88–R126 is disordered. The span at G106–R124 shows a compositional bias: polar residues. Phosphoserine occurs at positions 108 and 109. Residues A132–K613 form a glycosyltransferase region.

In the N-terminal section; belongs to the glycosyltransferase 20 family.

The enzyme catalyses D-glucose 6-phosphate + UDP-alpha-D-glucose = alpha,alpha-trehalose 6-phosphate + UDP + H(+). The chain is Putative alpha,alpha-trehalose-phosphate synthase [UDP-forming] 100 kDa subunit from Schizosaccharomyces pombe (strain 972 / ATCC 24843) (Fission yeast).